The sequence spans 473 residues: Argininosuccinate lyase (473 aa).

It belongs to the lyase 1 family. Argininosuccinate lyase subfamily.

It localises to the cytoplasm. The enzyme catalyses 2-(N(omega)-L-arginino)succinate = fumarate + L-arginine. Its pathway is amino-acid biosynthesis; L-arginine biosynthesis; L-arginine from L-ornithine and carbamoyl phosphate: step 3/3. The protein is Argininosuccinate lyase of Chelativorans sp. (strain BNC1).